Reading from the N-terminus, the 486-residue chain is Glutamate--tRNA ligase (486 aa).

Residues 11–21 carry the 'HIGH' region motif; the sequence is PSPTGFLHIGG. Zn(2+) contacts are provided by Cys108, Cys110, Cys136, and His138. Residues 253-257 carry the 'KMSKS' region motif; it reads KLSKR. Lys256 is a binding site for ATP.

It belongs to the class-I aminoacyl-tRNA synthetase family. Glutamate--tRNA ligase type 1 subfamily. Monomer. Zn(2+) serves as cofactor.

Its subcellular location is the cytoplasm. It catalyses the reaction tRNA(Glu) + L-glutamate + ATP = L-glutamyl-tRNA(Glu) + AMP + diphosphate. Functionally, catalyzes the attachment of glutamate to tRNA(Glu) in a two-step reaction: glutamate is first activated by ATP to form Glu-AMP and then transferred to the acceptor end of tRNA(Glu). In Lysinibacillus sphaericus (strain C3-41), this protein is Glutamate--tRNA ligase.